A 365-amino-acid polypeptide reads, in one-letter code: Peptide chain release factor 2 (365 aa).

Gln252 is modified (N5-methylglutamine).

It belongs to the prokaryotic/mitochondrial release factor family. In terms of processing, methylated by PrmC. Methylation increases the termination efficiency of RF2.

The protein localises to the cytoplasm. In terms of biological role, peptide chain release factor 2 directs the termination of translation in response to the peptide chain termination codons UGA and UAA. The protein is Peptide chain release factor 2 of Tolumonas auensis (strain DSM 9187 / NBRC 110442 / TA 4).